Consider the following 154-residue polypeptide: Myoglobin (154 aa).

The Globin domain maps to 2–148 (GLSEAEWQLV…FRKDIAAKYK (147 aa)). S4 carries the phosphoserine modification. H65 is a binding site for nitrite. H65 contacts O2. At T68 the chain carries Phosphothreonine. Residue H94 participates in heme b binding.

It belongs to the globin family. As to quaternary structure, monomeric.

The protein localises to the cytoplasm. It localises to the sarcoplasm. The catalysed reaction is Fe(III)-heme b-[protein] + nitric oxide + H2O = Fe(II)-heme b-[protein] + nitrite + 2 H(+). The enzyme catalyses H2O2 + AH2 = A + 2 H2O. Monomeric heme protein which primary function is to store oxygen and facilitate its diffusion within muscle tissues. Reversibly binds oxygen through a pentacoordinated heme iron and enables its timely and efficient release as needed during periods of heightened demand. Depending on the oxidative conditions of tissues and cells, and in addition to its ability to bind oxygen, it also has a nitrite reductase activity whereby it regulates the production of bioactive nitric oxide. Under stress conditions, like hypoxia and anoxia, it also protects cells against reactive oxygen species thanks to its pseudoperoxidase activity. The chain is Myoglobin (MB) from Ziphius cavirostris (Cuvier's beaked whale).